A 305-amino-acid chain; its full sequence is Methionyl-tRNA formyltransferase (305 aa).

111–114 (SLLP) serves as a coordination point for (6S)-5,6,7,8-tetrahydrofolate.

It belongs to the Fmt family.

The catalysed reaction is L-methionyl-tRNA(fMet) + (6R)-10-formyltetrahydrofolate = N-formyl-L-methionyl-tRNA(fMet) + (6S)-5,6,7,8-tetrahydrofolate + H(+). Attaches a formyl group to the free amino group of methionyl-tRNA(fMet). The formyl group appears to play a dual role in the initiator identity of N-formylmethionyl-tRNA by promoting its recognition by IF2 and preventing the misappropriation of this tRNA by the elongation apparatus. This Helicobacter pylori (strain J99 / ATCC 700824) (Campylobacter pylori J99) protein is Methionyl-tRNA formyltransferase.